The following is a 319-amino-acid chain: CBBY-like protein (319 aa).

A chloroplast-targeting transit peptide spans 1–65; the sequence is MATVKISLSL…YRSSRSVGVT (65 aa). Asp82 (nucleophile) is an active-site residue. Mg(2+)-binding residues include Asp82 and Asp84. Position 82 (Asp82) interacts with substrate. Asp84 serves as the catalytic Proton donor. Substrate contacts are provided by residues Glu91, 125-129, 158-161, and 198-204; these read GGKER, HKQK, and STSNEKA. Asp258 lines the Mg(2+) pocket.

The protein belongs to the HAD-like hydrolase superfamily. DOG/GPP family. It depends on Mg(2+) as a cofactor.

It localises to the plastid. The protein resides in the chloroplast. The enzyme catalyses D-xylulose 1,5-bisphosphate + H2O = D-xylulose 5-phosphate + phosphate. Highly selective xylulose-1,5-bisphosphate (XuBP) phosphatase. Also shows activity towards ribulose-1,5-bisphosphate (RuBP) and fructose-1,6-bisphosphate (FBP), but not towards fructose-6-phosphate (F6P) or ribulose-5-phosphate (Ru5P). Degrades xylulose-1,5-bisphosphate, a potent inhibitor of rubisco produced by the rubisco itself. The protein is CBBY-like protein of Arabidopsis thaliana (Mouse-ear cress).